We begin with the raw amino-acid sequence, 94 residues long: ATP-dependent Clp protease adapter protein ClpS (94 aa).

This sequence belongs to the ClpS family. As to quaternary structure, binds to the N-terminal domain of the chaperone ClpA.

Involved in the modulation of the specificity of the ClpAP-mediated ATP-dependent protein degradation. The sequence is that of ATP-dependent Clp protease adapter protein ClpS from Thermosynechococcus vestitus (strain NIES-2133 / IAM M-273 / BP-1).